A 75-amino-acid chain; its full sequence is uncharacterized protein (75 aa).

A dksA C4-type zinc finger spans residues 43–67 (CSECGLPIPTTRLRANPFAHRCVSC).

This is an uncharacterized protein from Haemophilus influenzae (strain ATCC 51907 / DSM 11121 / KW20 / Rd).